A 326-amino-acid polypeptide reads, in one-letter code: Malate dehydrogenase (326 aa).

Gly12–Ala18 lines the NAD(+) pocket. Substrate-binding residues include Arg93 and Arg99. NAD(+) is bound by residues Asn106, Gln113, and Val130–Asn132. Substrate is bound by residues Asn132 and Arg163. His188 serves as the catalytic Proton acceptor.

The protein belongs to the LDH/MDH superfamily. MDH type 2 family.

The enzyme catalyses (S)-malate + NAD(+) = oxaloacetate + NADH + H(+). Its function is as follows. Catalyzes the reversible oxidation of malate to oxaloacetate. The chain is Malate dehydrogenase from Chlamydia muridarum (strain MoPn / Nigg).